A 73-amino-acid chain; its full sequence is UPF0154 protein LGAS_0795 (73 aa).

Residues 3–23 (LGLAIFLIIIALLIGLVGGFY) traverse the membrane as a helical segment.

Belongs to the UPF0154 family.

Its subcellular location is the cell membrane. This Lactobacillus gasseri (strain ATCC 33323 / DSM 20243 / BCRC 14619 / CIP 102991 / JCM 1131 / KCTC 3163 / NCIMB 11718 / NCTC 13722 / AM63) protein is UPF0154 protein LGAS_0795.